The chain runs to 36 residues: Kappa-isophellitoxin-Tst1a (36 aa).

The ShKT domain maps to 2 to 36; sequence CENNFSDRECERRKKDCDSSMKFRELSCPKTCGTC. 3 cysteine pairs are disulfide-bonded: cysteine 2/cysteine 36, cysteine 11/cysteine 29, and cysteine 18/cysteine 33.

The protein belongs to the sea anemone type 1 potassium channel toxin family. Type 1a subfamily. Predominantly expressed in mesenterial filaments (at protein level), a morphological structure that has a functional role in prey killing and digestion. Also expressed in club-tips, tentacles, actinopharynx, body column, mesenterial filaments and pedal disk.

It is found in the secreted. Its subcellular location is the nematocyst. Functionally, probable toxin with unknown function. Does not inhibit all channels tested. Is not cytotoxic on macrophage. This chain is Kappa-isophellitoxin-Tst1a, found in Telmatactis stephensoni (Sea anemone).